The sequence spans 574 residues: Serine/arginine repetitive matrix protein 4 (574 aa).

Disordered stretches follow at residues Leu-45–Asp-217, Ile-257–Ser-291, Asp-366–Leu-422, Tyr-454–Arg-508, and Arg-526–Arg-574. Over residues Pro-51–Gly-72 the composition is skewed to basic and acidic residues. 3 stretches are compositionally biased toward basic residues: residues His-73 to Arg-88, Pro-102 to Ser-120, and Val-128 to Ala-184. The segment covering Asn-194–Asp-217 has biased composition (basic and acidic residues). The segment covering Gly-275 to Thr-289 has biased composition (polar residues). A compositionally biased stretch (basic and acidic residues) spans Asp-366 to Arg-385. Over residues Arg-405–Leu-422 the composition is skewed to low complexity. The segment covering Tyr-454–Arg-477 has biased composition (basic residues). The span at Asp-478–Arg-487 shows a compositional bias: basic and acidic residues. Low complexity predominate over residues Ile-496 to Arg-508. Basic residues predominate over residues Arg-526 to Ser-539. The span at His-540–Ser-559 shows a compositional bias: low complexity. Over residues Arg-560–Arg-574 the composition is skewed to basic residues.

Belongs to the nSR100 family.

Its subcellular location is the nucleus. Functionally, splicing factor specifically required for neural cell differentiation. Acts in conjunction with nPTB/PTBP2 by binding directly to its regulated target transcripts and promotes neural-specific exon inclusion in many genes that function in neural cell differentiation. Required to promote the inclusion of neural-specific exon 10 in nPTB/PTBP2, leading to increased expression of neural-specific nPTB/PTBP2. The polypeptide is Serine/arginine repetitive matrix protein 4 (srrm4) (Danio rerio (Zebrafish)).